A 270-amino-acid polypeptide reads, in one-letter code: Sulfur carrier protein FdhD (270 aa).

Basic and acidic residues-rich tracts occupy residues 1 to 10 and 20 to 30; these read MSMQDHDRTE and RHLDGSSRPDW. The interval 1–30 is disordered; the sequence is MSMQDHDRTEQGMTSLAVTRHLDGSSRPDW. C117 serves as the catalytic Cysteine persulfide intermediate.

Belongs to the FdhD family.

The protein resides in the cytoplasm. Required for formate dehydrogenase (FDH) activity. Acts as a sulfur carrier protein that transfers sulfur from IscS to the molybdenum cofactor prior to its insertion into FDH. The sequence is that of Sulfur carrier protein FdhD from Chromobacterium violaceum (strain ATCC 12472 / DSM 30191 / JCM 1249 / CCUG 213 / NBRC 12614 / NCIMB 9131 / NCTC 9757 / MK).